Here is a 151-residue protein sequence, read N- to C-terminus: MKKIDVKILDPRIGTEFPLPTYATIGSAGLDLRALVDEGFEVQPGETKLISTGLSIYIADPNLAAVILPRSGLGHKNGIVLGNLVGLIDSDYQGPLMVSLWNRSDKPFKIEIGDRIAQLVFVPVVQAEFNIVEEFQQTDRGNGGFGHSGKK.

Residues arginine 70–glycine 72, asparagine 83, leucine 87–aspartate 89, and methionine 97 each bind substrate.

It belongs to the dUTPase family. Requires Mg(2+) as cofactor.

The enzyme catalyses dUTP + H2O = dUMP + diphosphate + H(+). Its pathway is pyrimidine metabolism; dUMP biosynthesis; dUMP from dCTP (dUTP route): step 2/2. Functionally, this enzyme is involved in nucleotide metabolism: it produces dUMP, the immediate precursor of thymidine nucleotides and it decreases the intracellular concentration of dUTP so that uracil cannot be incorporated into DNA. This Histophilus somni (strain 129Pt) (Haemophilus somnus) protein is Deoxyuridine 5'-triphosphate nucleotidohydrolase.